The chain runs to 122 residues: Mth938 domain-containing protein (122 aa).

The tract at residues 6–122 (IASLSWGQMK…RVGGVFHSTC (117 aa)) is MTH138-like domain.

It belongs to the AAMDC family.

It localises to the cytoplasm. Functionally, may play a role in preadipocyte differentiation and adipogenesis. This chain is Mth938 domain-containing protein (AAMDC), found in Bos taurus (Bovine).